Here is a 1116-residue protein sequence, read N- to C-terminus: Probable chitinase LysM11 (1116 aa).

The LysM domain maps to 233 to 283; that stretch reads GTYTIQTNDNCAEIAAHFGVTQDDIYDLNEDTWGWAGCGTNDLKADQVICL. The GH18 domain maps to 346 to 719; the sequence is FYHVAYFEVF…LGVDPDSDEA (374 aa). E466 functions as the Proton donor in the catalytic mechanism. The chitin site is built by Y467 and W701.

It belongs to the glycosyl hydrolase 18 family. Chitinase class V subfamily.

It carries out the reaction Random endo-hydrolysis of N-acetyl-beta-D-glucosaminide (1-&gt;4)-beta-linkages in chitin and chitodextrins.. In terms of biological role, probable chitinase involved in the degradation of chitin, a component of the cell walls of fungi and exoskeletal elements of some animals (including worms and arthropods). Might be involved in manipulation of host defenses for successful infection. This is Probable chitinase LysM11 from Penicillium expansum (Blue mold rot fungus).